The sequence spans 206 residues: Small ribosomal subunit protein uS4 (206 aa).

Positions arginine 96–leucine 161 constitute an S4 RNA-binding domain.

The protein belongs to the universal ribosomal protein uS4 family. As to quaternary structure, part of the 30S ribosomal subunit. Contacts protein S5. The interaction surface between S4 and S5 is involved in control of translational fidelity.

Its function is as follows. One of the primary rRNA binding proteins, it binds directly to 16S rRNA where it nucleates assembly of the body of the 30S subunit. In terms of biological role, with S5 and S12 plays an important role in translational accuracy. The chain is Small ribosomal subunit protein uS4 from Legionella pneumophila (strain Corby).